A 260-amino-acid polypeptide reads, in one-letter code: uncharacterized protein (260 aa).

A coiled-coil region spans residues 214–252; the sequence is IHQFIETEIERIMEAAKELKAEKKDMTSELNRLLLNTVE.

This is an uncharacterized protein from Bacillus subtilis (strain 168).